The following is a 424-amino-acid chain: Catabolic NAD-specific glutamate dehydrogenase RocG (424 aa).

Positions 80 and 104 each coordinate substrate. Lys116 (proton donor) is an active-site residue. NAD(+)-binding residues include Thr200 and Asn231. Ser358 contacts substrate.

Belongs to the Glu/Leu/Phe/Val dehydrogenases family. Homohexamer. Interacts with transcriptional regulator GltC.

The enzyme catalyses L-glutamate + NAD(+) + H2O = 2-oxoglutarate + NH4(+) + NADH + H(+). In terms of biological role, devoted to catabolic function of glutamate (and other amino acids of the glutamate family) utilization as sole nitrogen source. It is not involved in anabolic function of glutamate biosynthesis since B.subtilis possesses only one route of glutamate biosynthesis from ammonia, catalyzed by glutamate synthase. Wild-type cells are unable to utilize glutamate or glutamine as a sole carbon source; thus RocG does not function physiologically to synthesize glutamate, but it is involved in the utilization of arginine, and proline as carbon or nitrogen source. The catabolic RocG is essential for controlling gltAB expression via an inhibitory interactions with the transcriptional regulator GltC in response to the availability of sugars. The polypeptide is Catabolic NAD-specific glutamate dehydrogenase RocG (Bacillus subtilis (strain 168)).